The sequence spans 242 residues: DNA repair protein RecO (242 aa).

It belongs to the RecO family. As to quaternary structure, monomer.

Involved in DNA repair and RecF pathway recombination. This is DNA repair protein RecO from Shigella dysenteriae serotype 1 (strain Sd197).